The following is a 235-amino-acid chain: Cytidylate kinase (235 aa).

Position 11 to 19 (11 to 19 (GPSGVGKST)) interacts with ATP.

The protein belongs to the cytidylate kinase family. Type 1 subfamily.

Its subcellular location is the cytoplasm. The catalysed reaction is CMP + ATP = CDP + ADP. It carries out the reaction dCMP + ATP = dCDP + ADP. This chain is Cytidylate kinase, found in Syntrophotalea carbinolica (strain DSM 2380 / NBRC 103641 / GraBd1) (Pelobacter carbinolicus).